The sequence spans 78 residues: MSRVCDLTGKRAMVGNNVSHAMNKTKRKFSVNLVKKRFYLPEEDRWITLRVAASTIKTINKNGITAVLKKAQSEGFIK.

This sequence belongs to the bacterial ribosomal protein bL28 family.

The polypeptide is Large ribosomal subunit protein bL28 (Flavobacterium johnsoniae (strain ATCC 17061 / DSM 2064 / JCM 8514 / BCRC 14874 / CCUG 350202 / NBRC 14942 / NCIMB 11054 / UW101) (Cytophaga johnsonae)).